Reading from the N-terminus, the 94-residue chain is Large ribosomal subunit protein eL36 (94 aa).

Residues 1–25 show a composition bias toward basic residues; it reads MKNAYKKVRVRYPVKRPDVKRKQRG. Positions 1-30 are disordered; that stretch reads MKNAYKKVRVRYPVKRPDVKRKQRGPRAET.

The protein belongs to the eukaryotic ribosomal protein eL36 family. In terms of assembly, component of the large ribosomal subunit.

Its subcellular location is the cytoplasm. The polypeptide is Large ribosomal subunit protein eL36 (RPL36) (Encephalitozoon cuniculi (strain GB-M1) (Microsporidian parasite)).